Consider the following 289-residue polypeptide: NAD(P)H-hydrate epimerase (289 aa).

Positions 71–277 constitute a YjeF N-terminal domain; that stretch reads AQTIDNELMS…SIVEKYNLKV (207 aa). Position 122–126 (122–126) interacts with (6S)-NADPHX; it reads NNGGD. K(+)-binding residues include Asn-123 and Asp-185. (6S)-NADPHX-binding positions include 189–195 and Asp-218; that span reads GFSFTGE. A K(+)-binding site is contributed by Ser-221.

The protein belongs to the NnrE/AIBP family. Requires K(+) as cofactor.

The catalysed reaction is (6R)-NADHX = (6S)-NADHX. It carries out the reaction (6R)-NADPHX = (6S)-NADPHX. Its function is as follows. Catalyzes the epimerization of the S- and R-forms of NAD(P)HX, a damaged form of NAD(P)H that is a result of enzymatic or heat-dependent hydration. This is a prerequisite for the S-specific NAD(P)H-hydrate dehydratase to allow the repair of both epimers of NAD(P)HX. This is NAD(P)H-hydrate epimerase from Plasmodium vivax (strain Salvador I).